Consider the following 217-residue polypeptide: tRNA (guanine-N(7)-)-methyltransferase (217 aa).

Positions 48, 73, 100, and 123 each coordinate S-adenosyl-L-methionine. Asp123 is a catalytic residue. Substrate contacts are provided by Lys127 and Asp159.

It belongs to the class I-like SAM-binding methyltransferase superfamily. TrmB family.

It carries out the reaction guanosine(46) in tRNA + S-adenosyl-L-methionine = N(7)-methylguanosine(46) in tRNA + S-adenosyl-L-homocysteine. Its pathway is tRNA modification; N(7)-methylguanine-tRNA biosynthesis. Catalyzes the formation of N(7)-methylguanine at position 46 (m7G46) in tRNA. This chain is tRNA (guanine-N(7)-)-methyltransferase, found in Leptospira interrogans serogroup Icterohaemorrhagiae serovar copenhageni (strain Fiocruz L1-130).